Reading from the N-terminus, the 276-residue chain is Probable ABC transporter permease protein NosY (276 aa).

Transmembrane regions (helical) follow at residues 20-40 (WLLA…WLGA), 55-75 (IASL…LLAY), 111-131 (ILAL…ALLV), 146-166 (FMIS…VLSG), 179-199 (LGVW…LLVL), and 251-271 (VLWL…YAIF).

As to quaternary structure, the complex may be composed of an ATP-binding protein (NosF), a transmembrane protein (NosY) and a solute-binding protein (NosD).

The protein localises to the cell inner membrane. Its function is as follows. Required for the assembly of the copper chromophores of nitrous oxide reductase. Could be part of the ABC transporter complex NosDFY. This is Probable ABC transporter permease protein NosY from Stutzerimonas stutzeri (Pseudomonas stutzeri).